Consider the following 545-residue polypeptide: CTP synthase (545 aa).

The amidoligase domain stretch occupies residues M1–L266. S14 is a binding site for CTP. Position 14 (S14) interacts with UTP. ATP is bound by residues S15 to I20 and D72. Positions 72 and 140 each coordinate Mg(2+). Residues D147–E149, K187–Q192, and K223 each bind CTP. UTP is bound by residues K187–Q192 and K223. Position 239–241 (K239–V241) interacts with ATP. The region spanning V291–R542 is the Glutamine amidotransferase type-1 domain. G352 lines the L-glutamine pocket. C379 acts as the Nucleophile; for glutamine hydrolysis in catalysis. Residues L380–Q383, E403, and R470 each bind L-glutamine. Catalysis depends on residues H515 and E517.

The protein belongs to the CTP synthase family. In terms of assembly, homotetramer.

The catalysed reaction is UTP + L-glutamine + ATP + H2O = CTP + L-glutamate + ADP + phosphate + 2 H(+). It carries out the reaction L-glutamine + H2O = L-glutamate + NH4(+). It catalyses the reaction UTP + NH4(+) + ATP = CTP + ADP + phosphate + 2 H(+). It participates in pyrimidine metabolism; CTP biosynthesis via de novo pathway; CTP from UDP: step 2/2. Allosterically activated by GTP, when glutamine is the substrate; GTP has no effect on the reaction when ammonia is the substrate. The allosteric effector GTP functions by stabilizing the protein conformation that binds the tetrahedral intermediate(s) formed during glutamine hydrolysis. Inhibited by the product CTP, via allosteric rather than competitive inhibition. Catalyzes the ATP-dependent amination of UTP to CTP with either L-glutamine or ammonia as the source of nitrogen. Regulates intracellular CTP levels through interactions with the four ribonucleotide triphosphates. The sequence is that of CTP synthase from Shewanella baltica (strain OS223).